The primary structure comprises 41 residues: Urotensin-1 (41 aa).

Valine amide is present on Val41.

It belongs to the sauvagine/corticotropin-releasing factor/urotensin I family.

It localises to the secreted. Urotensin is found in the teleost caudal neurosecretory system. It has a suggested role in osmoregulation and as a corticotropin-releasing factor. This chain is Urotensin-1, found in Catostomus commersonii (White sucker).